A 295-amino-acid chain; its full sequence is Ribosomal protein L11 methyltransferase (295 aa).

4 residues coordinate S-adenosyl-L-methionine: T138, G161, D183, and N230.

This sequence belongs to the methyltransferase superfamily. PrmA family.

It localises to the cytoplasm. The enzyme catalyses L-lysyl-[protein] + 3 S-adenosyl-L-methionine = N(6),N(6),N(6)-trimethyl-L-lysyl-[protein] + 3 S-adenosyl-L-homocysteine + 3 H(+). Functionally, methylates ribosomal protein L11. The protein is Ribosomal protein L11 methyltransferase of Rhodopseudomonas palustris (strain BisB5).